The primary structure comprises 950 residues: Valine--tRNA ligase, mitochondrial (950 aa).

A mitochondrion-targeting transit peptide spans 1–90 (MFHFQRSFSS…ITIQDALARF (90 aa)). The 'HIGH' region motif lies at 67–77 (PNITGKLHIGH). A 'KMSKS' region motif is present at residues 556–560 (KMSKS). K559 is a binding site for ATP.

The protein belongs to the class-I aminoacyl-tRNA synthetase family.

It localises to the mitochondrion. The catalysed reaction is tRNA(Val) + L-valine + ATP = L-valyl-tRNA(Val) + AMP + diphosphate. The sequence is that of Valine--tRNA ligase, mitochondrial (vas1) from Schizosaccharomyces pombe (strain 972 / ATCC 24843) (Fission yeast).